Reading from the N-terminus, the 293-residue chain is Cell division protein FtsQ (293 aa).

The Cytoplasmic portion of the chain corresponds to 1–27 (MRPLMRNRASERGVDPAPSRWAWRMQR). A helical membrane pass occupies residues 28 to 48 (LLLTPAFLLFLRAGVPVLVLF). The Periplasmic segment spans residues 49 to 293 (GAATWWLSDT…WWEIRQVSRQ (245 aa)). In terms of domain architecture, POTRA spans 81–149 (FMVQLMAVDG…GVLHIDVEPR (69 aa)).

This sequence belongs to the FtsQ/DivIB family. FtsQ subfamily.

It is found in the cell inner membrane. In terms of biological role, essential cell division protein. The protein is Cell division protein FtsQ of Roseobacter litoralis (strain ATCC 49566 / DSM 6996 / JCM 21268 / NBRC 15278 / OCh 149).